Here is a 416-residue protein sequence, read N- to C-terminus: Gamma-glutamyl phosphate reductase (416 aa).

Belongs to the gamma-glutamyl phosphate reductase family.

Its subcellular location is the cytoplasm. The enzyme catalyses L-glutamate 5-semialdehyde + phosphate + NADP(+) = L-glutamyl 5-phosphate + NADPH + H(+). It participates in amino-acid biosynthesis; L-proline biosynthesis; L-glutamate 5-semialdehyde from L-glutamate: step 2/2. In terms of biological role, catalyzes the NADPH-dependent reduction of L-glutamate 5-phosphate into L-glutamate 5-semialdehyde and phosphate. The product spontaneously undergoes cyclization to form 1-pyrroline-5-carboxylate. In Streptococcus pyogenes serotype M4 (strain MGAS10750), this protein is Gamma-glutamyl phosphate reductase.